Consider the following 458-residue polypeptide: Pentatricopeptide repeat-containing protein At1g77405 (458 aa).

PPR repeat units lie at residues 164–198 (TTAS…HCKP), 199–233 (DVYA…GFRY), 236–271 (DTYT…NRMF), 282–316 (DVVT…GCVP), 317–351 (NQVT…GHGV), 353–387 (GSST…GLVP), and 388–419 (REYT…MREG).

Belongs to the PPR family. P subfamily.

In Arabidopsis thaliana (Mouse-ear cress), this protein is Pentatricopeptide repeat-containing protein At1g77405.